The chain runs to 582 residues: Guanine nucleotide-binding protein-like NSN1 (582 aa).

Over residues 1–46 (MVKRSKKSKSKRVTLKQKHKVLKKVKEHHKKKAKDAKKLGLHRKPR) the composition is skewed to basic residues. A disordered region spans residues 1 to 58 (MVKRSKKSKSKRVTLKQKHKVLKKVKEHHKKKAKDAKKLGLHRKPRVEKDPGIPNDWP). Positions 2–49 (VKRSKKSKSKRVTLKQKHKVLKKVKEHHKKKAKDAKKLGLHRKPRVEK) are basic. Short sequence motifs (nuclear localization signal) lie at residues 5–12 (SKKSKSKR), 22–29 (LKKVKEHH), and 69–76 (VRRARALE). Residues 15–94 (LKQKHKVLKK…RKERAKKRKL (80 aa)) are a coiled coil. Residues 127–311 (YKELVKVIEL…LLDCPGVVML (185 aa)) enclose the CP-type G domain. A DARXP motif motif is present at residues 145-149 (DARDP). The G4 stretch occupies residues 175-178 (NKID). GTP is bound at residue 175–178 (NKID). Positions 202–204 (KCS) are G5. Residues 260-267 (GLPNVGKS) are G1. 263 to 268 (NVGKSS) contributes to the GTP binding site. The tract at residues 281–456 (VGATPGLTRS…NEFNPVIIPS (176 aa)) is intermediate. Residues 286-290 (GLTRS) are G2. GTP is bound by residues 304 to 307 (DCPG) and G307. Positions 304 to 307 (DCPG) are G3. The acidic stretch occupies residues 463–551 (DETMIEDESK…EEDLMDGDYD (89 aa)). The disordered stretch occupies residues 469 to 545 (DESKTQTEEE…KKAGADEEDL (77 aa)). Acidic residues predominate over residues 476–496 (EEEAEHESDDDESMGGEEEEE). Positions 497–506 (AGKTKEKSET) are enriched in basic and acidic residues. The stretch at 515–537 (AAESMLNTKKQKAEKKKRKKAKK) forms a coiled coil. The Nuclear localization signal 4 motif lies at 522 to 529 (TKKQKAEK). Residues 523-537 (KKQKAEKKKRKKAKK) are compositionally biased toward basic residues.

The protein belongs to the TRAFAC class YlqF/YawG GTPase family. As to quaternary structure, interacts with EBP2 and PES. As to expression, mostly expressed in flowers, siliques and inflorescence apex, and, to a lower extent, in stems and leaves.

It localises to the nucleus. Its subcellular location is the nucleolus. Its function is as follows. Involved in the differentiation of epidermal cells, probably via the regulation of the expression of meristem-related genes (e.g. CLV3, STM, KNAT1, CUC2 and AG) and of leaf polarity-related genes (e.g. YAB5, FIL, AS2, PHB and PHV). May play a role in regulating cellular proliferation. Necessary for flower development, probably by preventing apical dominance through the down-regulation of AG expression. Required for embryogenesis, leaf and cotyledon development, as well as for leaf polarity establishment. Plays an important role in plant growth and senescence by modulating ribosome biogenesis in nucleolus. Possesses GTPAse activity in vitro. Possesses RNA binding activity in vitro. Associates with ribosomes. The polypeptide is Guanine nucleotide-binding protein-like NSN1 (Arabidopsis thaliana (Mouse-ear cress)).